The following is a 200-amino-acid chain: MRIILLGPPGAGKGTQSERIVERYRVPQLSTGDMLRAAVAAETPVGLEAKAIMESGGLVSDAIVVGIVADRIEEADAKNGFILDGFPRTVEQAKALDAMLAQKGIALDAVVEFVVDETALVGRIAKRAEETAARGQPVRKDDTPEVFKTRLDAYRKQTAPLSDYYAGTGLLRKIDGMKPIDVVTGDVTALLDGFRETASS.

10–15 is an ATP binding site; the sequence is GAGKGT. The tract at residues 30-59 is NMP; sequence STGDMLRAAVAAETPVGLEAKAIMESGGLV. AMP contacts are provided by residues threonine 31, arginine 36, 57–59, 85–88, and glutamine 92; these read GLV and GFPR. Residues 126–142 are LID; it reads KRAEETAARGQPVRKDD. An ATP-binding site is contributed by arginine 127. The AMP site is built by arginine 139 and arginine 150. ATP is bound at residue lysine 178.

It belongs to the adenylate kinase family. In terms of assembly, monomer.

It is found in the cytoplasm. It carries out the reaction AMP + ATP = 2 ADP. It participates in purine metabolism; AMP biosynthesis via salvage pathway; AMP from ADP: step 1/1. Functionally, catalyzes the reversible transfer of the terminal phosphate group between ATP and AMP. Plays an important role in cellular energy homeostasis and in adenine nucleotide metabolism. This chain is Adenylate kinase, found in Methylorubrum extorquens (strain PA1) (Methylobacterium extorquens).